A 494-amino-acid chain; its full sequence is MFQVQKELASHEAVVVALFEEEKTSSFVQELDKAFEGQLQVLLEEKELSTKKKAISKVHSLGKTDVKRYYFVGLGKKESYTTETLRSALGKTFKTLQAAKVQDAAILLDSFVTEKLDAIDVAHIAAEVQGLGTYELQTYKSDKKDRVELEKFTAITAEDAQEIEAALTVGYVHGRATNSARTLVNMPPNVLTATKLAEYAVELAEKYDMDYKVLEKEEMEELGMGALLAVNQGSVEPPKMIALIYKGKEEWTDVIGFVGKGITYDTGGYSLKPREGMVGMKGDMGGAAAVLGAMEIIGELRPEQNVIAVIPSTDNVVSGTAFKPDDVITSMSGKTIEVLNTDAEGRLALADGITYAKKLGANYLIDVATLTGGVIVALGNHTTGAMTNNEELFEQVLEASMETDESIWQLPIFDRDKERVRNSKFADLNNSPGREGHAVMAGTFIGEFAEDTPWVHLDIAGTSESSGAHDLGPAGATGAMVRTLATLVERFGEE.

2 residues coordinate Mn(2+): K260 and D265. K272 is a catalytic residue. Mn(2+)-binding residues include D283, D342, and E344. Residue R346 is part of the active site.

Belongs to the peptidase M17 family. Mn(2+) is required as a cofactor.

It localises to the cytoplasm. The catalysed reaction is Release of an N-terminal amino acid, Xaa-|-Yaa-, in which Xaa is preferably Leu, but may be other amino acids including Pro although not Arg or Lys, and Yaa may be Pro. Amino acid amides and methyl esters are also readily hydrolyzed, but rates on arylamides are exceedingly low.. The enzyme catalyses Release of an N-terminal amino acid, preferentially leucine, but not glutamic or aspartic acids.. Presumably involved in the processing and regular turnover of intracellular proteins. Catalyzes the removal of unsubstituted N-terminal amino acids from various peptides. This chain is Probable cytosol aminopeptidase, found in Bacillus anthracis (strain CDC 684 / NRRL 3495).